We begin with the raw amino-acid sequence, 137 residues long: MSDLPVAPTPAEPVKYGERAIEAGQLITFPNPRPGRDYDIHITLPEFTCKCPFSGYPDFATIYLTYVPHEKVVELKALKLYVNSFRDRYISHEEVVHVVLDDFVAAADPLRVQIKGDFNPRGNVHMVVEARHTRPGT.

C51 functions as the Thioimide intermediate in the catalytic mechanism. D58 serves as the catalytic Proton donor. Substrate-binding positions include V73–L75 and H92–E93.

It belongs to the GTP cyclohydrolase I family. QueF type 1 subfamily.

It localises to the cytoplasm. The enzyme catalyses 7-aminomethyl-7-carbaguanine + 2 NADP(+) = 7-cyano-7-deazaguanine + 2 NADPH + 3 H(+). It functions in the pathway tRNA modification; tRNA-queuosine biosynthesis. In terms of biological role, catalyzes the NADPH-dependent reduction of 7-cyano-7-deazaguanine (preQ0) to 7-aminomethyl-7-deazaguanine (preQ1). The protein is NADPH-dependent 7-cyano-7-deazaguanine reductase of Gloeobacter violaceus (strain ATCC 29082 / PCC 7421).